Consider the following 430-residue polypeptide: MSEPPQPPGKPSANAPKPAPRLKSIKPTTPGDANKITTPTIPSIKTKKEFKPNIPTARKKKDEKDPLSGAISDLISASLSPLAVVGDRPGKPNATSSGKFRSNLNPNRKKPAAIPITNLFQTPLVQAETQQPQSTYEMNKKNEKKDSDLLAQLFHEMEVDPMQPFHPTHLPLVDPRKIMKAYSLDDASKDLNETKRELEEKIKNGELSDTTNFTLNSIGSEDNNNNGGGSGQVKFVESSKKKNKEISTKDKPFYVEDQFLNKDKLFFIQLPNLLPSTQSKPNFNIPNPVLPPPKPTTITKTVTNPDGSITTTTIPINENTKIEDQPPPPPKELDEKAFVPVIYPGDFPPSIKEMPSGKLGTLKIYKSGKSILKIGTVEYDISSGDKLKFLEEVQCFQTKGGPDNSPTCYTLGIPSQHLVAAPIISQISGI.

Positions 1 to 10 (MSEPPQPPGK) are enriched in pro residues. 3 disordered regions span residues 1–108 (MSEP…NPNR), 218–240 (IGSE…ESSK), and 283–313 (FNIP…TTTT). Positions 35–44 (KITTPTIPSI) are enriched in low complexity. Positions 93–106 (NATSSGKFRSNLNP) are enriched in polar residues. Positions 296 to 313 (TTITKTVTNPDGSITTTT) are enriched in low complexity.

This sequence belongs to the eukaryotic RPC4/POLR3D RNA polymerase subunit family. Component of the RNA polymerase III (Pol III) complex consisting of 17 subunits.

The protein resides in the nucleus. Its function is as follows. DNA-dependent RNA polymerase catalyzes the transcription of DNA into RNA using the four ribonucleoside triphosphates as substrates. Specific component of RNA polymerase III which synthesizes small RNAs, such as 5S rRNA and tRNAs. The polypeptide is DNA-directed RNA polymerase III subunit rpc4 (polr3d) (Dictyostelium discoideum (Social amoeba)).